Here is a 379-residue protein sequence, read N- to C-terminus: Cobalt-precorrin-5B C(1)-methyltransferase (379 aa).

The protein belongs to the CbiD family.

It catalyses the reaction Co-precorrin-5B + S-adenosyl-L-methionine = Co-precorrin-6A + S-adenosyl-L-homocysteine. It functions in the pathway cofactor biosynthesis; adenosylcobalamin biosynthesis; cob(II)yrinate a,c-diamide from sirohydrochlorin (anaerobic route): step 6/10. Catalyzes the methylation of C-1 in cobalt-precorrin-5B to form cobalt-precorrin-6A. The chain is Cobalt-precorrin-5B C(1)-methyltransferase from Salmonella typhimurium (strain LT2 / SGSC1412 / ATCC 700720).